The following is a 131-amino-acid chain: MSWQAYVDDHLMCDIDGNRLTAAAILGQDGSVWSQSATFPAFKPEEIAAILKDLDQPGTLAPTGLFLGGTKYMVIQGEAGAVIRGKKGSGGITVKKTNQALIIGIYDEPLTPGQCNMIVERLGDYLIEQGL.

It belongs to the profilin family. As to quaternary structure, occurs in many kinds of cells as a complex with monomeric actin in a 1:1 ratio.

Its subcellular location is the cytoplasm. The protein resides in the cytoskeleton. Binds to actin and affects the structure of the cytoskeleton. At high concentrations, profilin prevents the polymerization of actin, whereas it enhances it at low concentrations. By binding to PIP2, it inhibits the formation of IP3 and DG. This chain is Profilin, found in Prunus avium (Cherry).